Here is a 352-residue protein sequence, read N- to C-terminus: Mitochondrial ubiquitin ligase activator of NFKB 1 (352 aa).

At 1-8 (MESGGRPS) the chain is on the cytoplasmic side. A helical transmembrane segment spans residues 9–29 (LCQFILLGTTSVVTAALYSVY). Topologically, residues 30 to 238 (RQKARVSQEL…LLQRQESSVR (209 aa)) are mitochondrial intermembrane. Residue lysine 52 forms a Glycyl lysine isopeptide (Lys-Gly) (interchain with G-Cter in ubiquitin) linkage. Residues 239–259 (LWKVLALVFGFATCATLFFIL) traverse the membrane as a helical segment. Topologically, residues 260–352 (RKQYLQRQER…ITRVIPLYNS (93 aa)) are cytoplasmic. Glycyl lysine isopeptide (Lys-Gly) (interchain with G-Cter in ubiquitin) cross-links involve residues lysine 273 and lysine 299. The segment at 302 to 340 (CVVCLSSFKSCVFLECGHVCSCTECYRALPEPKKCPICR) adopts an RING-type zinc-finger fold.

In terms of assembly, homooligomer. Interacts with MAP3K7/TAK1. Interacts with UBC9. Interacts with and sumoylates DNM1L. Interacts with MAVS. Interacts with TP53 (via N-terminus); the interaction leads to ubiquitination and proteasomal degradation of TP53. In terms of processing, ubiquitinated by PRKN during mitophagy, leading to its degradation and enhancement of mitophagy. Deubiquitinated by USP30. As to expression, widely expressed with highest levels in the heart, skeletal muscle, placenta, kidney and liver. Barely detectable in colon and thymus.

It localises to the mitochondrion outer membrane. It is found in the peroxisome. It catalyses the reaction S-ubiquitinyl-[E2 ubiquitin-conjugating enzyme]-L-cysteine + [acceptor protein]-L-lysine = [E2 ubiquitin-conjugating enzyme]-L-cysteine + N(6)-ubiquitinyl-[acceptor protein]-L-lysine.. Its pathway is protein modification; protein ubiquitination. The protein operates within protein modification; protein sumoylation. Functionally, exhibits weak E3 ubiquitin-protein ligase activity. E3 ubiquitin ligases accept ubiquitin from an E2 ubiquitin-conjugating enzyme in the form of a thioester and then directly transfer the ubiquitin to targeted substrates. Can ubiquitinate AKT1 preferentially at 'Lys-284' involving 'Lys-48'-linked polyubiquitination and seems to be involved in regulation of Akt signaling by targeting phosphorylated Akt to proteasomal degradation. Mediates polyubiquitination of cytoplasmic TP53 at 'Lys-24' which targets TP53 for proteasomal degradation, thus reducing TP53 levels in the cytoplasm and mitochondrion. Proposed to preferentially act as a SUMO E3 ligase at physiological concentrations. Plays a role in the control of mitochondrial morphology by promoting mitochondrial fragmentation, and influences mitochondrial localization. Likely to promote mitochondrial fission through negatively regulating the mitochondrial fusion proteins MFN1 and MFN2, acting in a pathway that is parallel to the PRKN/PINK1 regulatory pathway. May also be involved in the sumoylation of the membrane fission protein DNM1L. Inhibits cell growth. When overexpressed, activates JNK through MAP3K7/TAK1 and induces caspase-dependent apoptosis. Involved in the modulation of innate immune defense against viruses by inhibiting RIGI-dependent antiviral response. Can mediate RIGI sumoylation and disrupt its polyubiquitination. In Homo sapiens (Human), this protein is Mitochondrial ubiquitin ligase activator of NFKB 1 (MUL1).